The chain runs to 619 residues: MGKIRKLDDQLSNKIAAGEVVERPASVVKELVENAVDANSTIIEIELEEAGLTKIRVIDNGDGMEEDDCLVAFERHATSKIKDEHDLFRIRTLGFRGEALPSIASVSEVEMKTSTGDGPGTKVVLKGGKLVVHERTTSRKGTDITVSNLFFNTPARLKYMKTIHTELGHVTDVVNRLAMAHPDISFRLRHHGKQLLYTSGNGDVRHVLAAIYGMDVAKKMIPIQAESLDFTVQGYISLPEVTRASRNYISTIVNGRYVRNIPLAKAIEAGYHTLLPIGRYPIVFLSIAMDPILVDVNVHPAKLEVRFSKEAELNELVTQAIRQALQARTLIPEMMIKQKETPKPKAEQTAWTFEHVVKEPFVSPLVHVDEPKQVDEPKQSSPVQEPKEEIPSFLPTVESKQNDVDDELVEMDEQTESSDEQEHVNDRLPPLYPIGQMHGTYILAQNERGLYIIDQHAAQERIKYEYFREKVGEVINEVQELLVPLTFHYPTDEYVLIDAHREELAKCGVFLEPFGHNTFIVRSHPSWFPKGEEAEIIEEMIQQVIDMKKVDMKQLREKAAILMSCKRSIKANEYLRDDEIFALLESLRKTTDPFTCPHGRPIIIHFSTYELEKMFKRVM.

Over residues 368–378 (VDEPKQVDEPK) the composition is skewed to basic and acidic residues. The tract at residues 368–403 (VDEPKQVDEPKQSSPVQEPKEEIPSFLPTVESKQND) is disordered.

This sequence belongs to the DNA mismatch repair MutL/HexB family.

This protein is involved in the repair of mismatches in DNA. It is required for dam-dependent methyl-directed DNA mismatch repair. May act as a 'molecular matchmaker', a protein that promotes the formation of a stable complex between two or more DNA-binding proteins in an ATP-dependent manner without itself being part of a final effector complex. This is DNA mismatch repair protein MutL from Geobacillus sp. (strain WCH70).